Reading from the N-terminus, the 211-residue chain is Large ribosomal subunit protein uL4 (211 aa).

The segment at 50 to 77 (STLTKGEVSGGGKKPYKQKHTGKARQGS) is disordered. The segment covering 63-72 (KPYKQKHTGK) has biased composition (basic residues).

Belongs to the universal ribosomal protein uL4 family. Part of the 50S ribosomal subunit.

Functionally, one of the primary rRNA binding proteins, this protein initially binds near the 5'-end of the 23S rRNA. It is important during the early stages of 50S assembly. It makes multiple contacts with different domains of the 23S rRNA in the assembled 50S subunit and ribosome. In terms of biological role, forms part of the polypeptide exit tunnel. This is Large ribosomal subunit protein uL4 from Mycoplasma genitalium (strain ATCC 33530 / DSM 19775 / NCTC 10195 / G37) (Mycoplasmoides genitalium).